An 809-amino-acid polypeptide reads, in one-letter code: Phospholipase D alpha 1 (809 aa).

Residues 1–125 form the C2 domain; the sequence is MAQILLHGTL…LDGHEIDKWV (125 aa). Asp186 is a Ca(2+) binding site. In terms of domain architecture, PLD phosphodiesterase 1 spans 326–365; it reads TMFTHHQKIVVVDSALPGGGGSDKRRIVSFVGGLDLCDGR. Residues His331, Lys333, and Asp338 contribute to the active site. A 1,2-diacyl-sn-glycero-3-phosphate is bound at residue His331. Residues His371 and His405 each contribute to the Ca(2+) site. The a 1,2-diacyl-sn-glycero-3-phosphate site is built by Gln521 and His660. The region spanning 655–682 is the PLD phosphodiesterase 2 domain; the sequence is FMIYVHTKMMIVDDEYIIIGSANINQRS. Residues His660, Lys662, and Asp667 contribute to the active site. Glu721 serves as a coordination point for Ca(2+).

Belongs to the phospholipase D family. C2-PLD subfamily. The cofactor is Ca(2+).

The catalysed reaction is a 1,2-diacyl-sn-glycero-3-phosphocholine + H2O = a 1,2-diacyl-sn-glycero-3-phosphate + choline + H(+). Its function is as follows. Hydrolyzes glycerol-phospholipids at the terminal phosphodiesteric bond. Plays an important role in various cellular processes. The chain is Phospholipase D alpha 1 (PLD1) from Vigna unguiculata (Cowpea).